The following is a 518-amino-acid chain: DNA nucleotidylexotransferase (518 aa).

The Nuclear localization signal motif lies at 11 to 17 (FGKKRQK). A BRCT domain is found at 27–124 (IYEIKFHEFV…KPVDTKGKYQ (98 aa)). The mediates interaction with DNTTIP2 stretch occupies residues 153 to 518 (SQYACQRRTT…EYIQPSERNA (366 aa)). Residues 260 to 264 (VGLKT) are involved in DNA binding. Residues 335–340 (GFRRGK) and 344–347 (HDVD) contribute to the a 2'-deoxyribonucleoside 5'-triphosphate site. D345, D347, and D442 together coordinate Mg(2+). 457–458 (GW) is an a 2'-deoxyribonucleoside 5'-triphosphate binding site.

Belongs to the DNA polymerase type-X family. In terms of assembly, interacts with PRP19 and DNTTIP1. Interacts with TRERF1. Forms a ternary complex with DNTTIP2 and core histone. Released from this complex by PCNA. It depends on Mg(2+) as a cofactor.

The protein localises to the nucleus. The enzyme catalyses DNA(n) + a 2'-deoxyribonucleoside 5'-triphosphate = DNA(n+1) + diphosphate. Its function is as follows. Template-independent DNA polymerase which catalyzes the random addition of deoxynucleoside 5'-triphosphate to the 3'-end of a DNA initiator. One of the in vivo functions of this enzyme is the addition of nucleotides at the junction (N region) of rearranged Ig heavy chain and T-cell receptor gene segments during the maturation of B- and T-cells. This Monodelphis domestica (Gray short-tailed opossum) protein is DNA nucleotidylexotransferase (DNTT).